The chain runs to 255 residues: Type III pantothenate kinase (255 aa).

Residue 6 to 13 (DIGNSNID) participates in ATP binding. A substrate-binding site is contributed by 107–110 (GADL). Residue aspartate 109 is the Proton acceptor of the active site. Aspartate 129 serves as a coordination point for K(+). Residue threonine 132 coordinates ATP. Residue threonine 183 coordinates substrate.

The protein belongs to the type III pantothenate kinase family. In terms of assembly, homodimer. NH4(+) is required as a cofactor. Requires K(+) as cofactor.

Its subcellular location is the cytoplasm. The catalysed reaction is (R)-pantothenate + ATP = (R)-4'-phosphopantothenate + ADP + H(+). It participates in cofactor biosynthesis; coenzyme A biosynthesis; CoA from (R)-pantothenate: step 1/5. Catalyzes the phosphorylation of pantothenate (Pan), the first step in CoA biosynthesis. The polypeptide is Type III pantothenate kinase (Dictyoglomus turgidum (strain DSM 6724 / Z-1310)).